The chain runs to 536 residues: Phosphoenolpyruvate carboxykinase (ATP) (536 aa).

3 residues coordinate substrate: arginine 61, tyrosine 195, and lysine 201. ATP-binding positions include lysine 201, histidine 220, and 236–244; that span reads GLSGTGKTT. Residues lysine 201 and histidine 220 each coordinate Mn(2+). Aspartate 257 contacts Mn(2+). Positions 285, 322, and 447 each coordinate ATP. Position 322 (arginine 322) interacts with substrate.

It belongs to the phosphoenolpyruvate carboxykinase (ATP) family. Requires Mn(2+) as cofactor.

The protein resides in the cytoplasm. The catalysed reaction is oxaloacetate + ATP = phosphoenolpyruvate + ADP + CO2. Its pathway is carbohydrate biosynthesis; gluconeogenesis. Functionally, involved in the gluconeogenesis. Catalyzes the conversion of oxaloacetate (OAA) to phosphoenolpyruvate (PEP) through direct phosphoryl transfer between the nucleoside triphosphate and OAA. The polypeptide is Phosphoenolpyruvate carboxykinase (ATP) (Rhizobium etli (strain ATCC 51251 / DSM 11541 / JCM 21823 / NBRC 15573 / CFN 42)).